A 418-amino-acid polypeptide reads, in one-letter code: Ig-like V-type domain-containing protein FAM187A (418 aa).

An N-terminal signal peptide occupies residues 1-18 (MRLAPTTVLLWAWGSLQA). Residues 19–376 (FEIVEKENIF…ASLSDPETRT (358 aa)) are Extracellular-facing. One can recognise an Ig-like V-type domain in the interval 267–361 (PWVPQVPIQF…IAGFRLGVTS (95 aa)). Cysteine 289 and cysteine 345 are disulfide-bonded. N-linked (GlcNAc...) asparagine glycosylation is present at asparagine 317. A helical membrane pass occupies residues 377 to 397 (AVELTLIGYLLIAVVFVTIHL). The Cytoplasmic portion of the chain corresponds to 398 to 418 (CRCCCQSRCCPNFSAQTLLQL).

Belongs to the FAM187 family.

It is found in the membrane. This is Ig-like V-type domain-containing protein FAM187A (Fam187a) from Rattus norvegicus (Rat).